We begin with the raw amino-acid sequence, 383 residues long: WD repeat-containing protein 55 (383 aa).

Residues 1–11 are compositionally biased toward basic and acidic residues; it reads MDRTCEERPAE. The segment at 1-33 is disordered; that stretch reads MDRTCEERPAEDGSDEEDPDSMEAPTRIRDTPE. The span at 12 to 21 shows a compositional bias: acidic residues; it reads DGSDEEDPDS. At Ser-14 the chain carries Phosphoserine. 7 WD repeats span residues 36-75, 82-121, 125-163, 166-205, 208-247, 250-289, and 293-332; these read VLEAPASGLAFHPARDLLAAGDVDGDVFVFSYSCQEGETK, HHLKACRAVAFSEDGQKLITVSKDKAIHVLDVEQGQLERR, AHGAPINSLLLVDENVLATGDDTGGICLWDQRKEGPLMD, QHEEYIADMALDPAKKLLLTASGDGCLGIFNIKRRRFELL, PQSGDLTSVTLMKWGKKVACGSSEGTIYLFNWNGFGATSD, ALRAESIDCMVPVTESLLCTGSTDGVIRAVNILPNRVVGS, and HTGEPVEELALSHCGRFLASSGHDQRLKFWDMAQLRAVVV. Position 354 is a phosphoserine (Ser-354). The segment at 363 to 383 is disordered; the sequence is REEGEDSMAQEEKEETGDDSD. Residues 365–383 are compositionally biased toward acidic residues; sequence EGEDSMAQEEKEETGDDSD. Phosphothreonine is present on Thr-378. Ser-382 is modified (phosphoserine).

The protein belongs to the WD repeat WDR55 family.

It is found in the nucleus. The protein resides in the nucleolus. Its subcellular location is the cytoplasm. Its function is as follows. Nucleolar protein that acts as a modulator of rRNA synthesis. Plays a central role during organogenesis. In Homo sapiens (Human), this protein is WD repeat-containing protein 55 (WDR55).